The primary structure comprises 453 residues: Putative amino acid/polyamine transporter MPH_07630_2 (453 aa).

Helical transmembrane passes span 2 to 21 (IGFS…VLVV), 30 to 50 (VMIW…YSMA), and 81 to 101 (VCGW…NFIA). Residue asparagine 110 is glycosylated (N-linked (GlcNAc...) asparagine). Transmembrane regions (helical) follow at residues 121-141 (WHAV…SIFL) and 151-171 (AILI…LATN). N-linked (GlcNAc...) asparagine glycosylation occurs at asparagine 186. The next 2 helical transmembrane spans lie at 193 to 213 (AYAA…YDAP) and 231 to 251 (IVMS…SLCF). Residue asparagine 274 is glycosylated (N-linked (GlcNAc...) asparagine). Helical transmembrane passes span 277–297 (GSVA…LVCA), 330–350 (LGVP…FNSI), 358–378 (FNTV…IPLL), and 403–423 (GLLA…TFNF). Residue asparagine 435 is glycosylated (N-linked (GlcNAc...) asparagine).

This sequence belongs to the amino acid-polyamine-organocation (APC) superfamily.

It is found in the membrane. The polypeptide is Putative amino acid/polyamine transporter MPH_07630_2 (Macrophomina phaseolina (strain MS6) (Charcoal rot fungus)).